A 359-amino-acid polypeptide reads, in one-letter code: Histidinol-phosphate aminotransferase (359 aa).

Position 217 is an N6-(pyridoxal phosphate)lysine (Lys-217).

The protein belongs to the class-II pyridoxal-phosphate-dependent aminotransferase family. Histidinol-phosphate aminotransferase subfamily. In terms of assembly, homodimer. Pyridoxal 5'-phosphate is required as a cofactor.

The catalysed reaction is L-histidinol phosphate + 2-oxoglutarate = 3-(imidazol-4-yl)-2-oxopropyl phosphate + L-glutamate. The protein operates within amino-acid biosynthesis; L-histidine biosynthesis; L-histidine from 5-phospho-alpha-D-ribose 1-diphosphate: step 7/9. The sequence is that of Histidinol-phosphate aminotransferase from Salmonella paratyphi A (strain ATCC 9150 / SARB42).